Here is a 534-residue protein sequence, read N- to C-terminus: Probable alanine aminotransferase, mitochondrial (534 aa).

Residues 1–18 constitute a mitochondrion transit peptide; the sequence is MFKRSLKVLLSNPPINRV. N6-(pyridoxal phosphate)lysine is present on Lys-352.

It belongs to the class-I pyridoxal-phosphate-dependent aminotransferase family. Alanine aminotransferase subfamily. In terms of assembly, homodimer. The cofactor is pyridoxal 5'-phosphate.

It is found in the mitochondrion matrix. It catalyses the reaction L-alanine + 2-oxoglutarate = pyruvate + L-glutamate. Its pathway is amino-acid degradation; L-alanine degradation via transaminase pathway; pyruvate from L-alanine: step 1/1. The chain is Probable alanine aminotransferase, mitochondrial (gpt) from Dictyostelium discoideum (Social amoeba).